A 547-amino-acid chain; its full sequence is Chaperonin GroEL (547 aa).

ATP is bound by residues 30–33, Lys-51, 87–91, Gly-415, and Asp-495; these read TLGP and DGTTT. The interval 526 to 547 is disordered; sequence KKDTPVPPMPGGGMGGMGGMDF. The span at 536-547 shows a compositional bias: gly residues; the sequence is GGGMGGMGGMDF.

Belongs to the chaperonin (HSP60) family. In terms of assembly, forms a cylinder of 14 subunits composed of two heptameric rings stacked back-to-back. Interacts with the co-chaperonin GroES.

It localises to the cytoplasm. It catalyses the reaction ATP + H2O + a folded polypeptide = ADP + phosphate + an unfolded polypeptide.. Functionally, together with its co-chaperonin GroES, plays an essential role in assisting protein folding. The GroEL-GroES system forms a nano-cage that allows encapsulation of the non-native substrate proteins and provides a physical environment optimized to promote and accelerate protein folding. The sequence is that of Chaperonin GroEL from Bartonella henselae (strain ATCC 49882 / DSM 28221 / CCUG 30454 / Houston 1) (Rochalimaea henselae).